The primary structure comprises 447 residues: CBL-interacting serine/threonine-protein kinase 9 (447 aa).

The region spanning 19–274 (YEMGRTLGEG…IAELLEDEWF (256 aa)) is the Protein kinase domain. ATP is bound by residues 25-33 (LGEGSFAKV) and K48. D142 functions as the Proton acceptor in the catalytic mechanism. An activation loop region spans residues 160 to 189 (DFGLSAFSRQVREDGLLHTACGTPNYVAPE). S164 carries the post-translational modification Phosphoserine. T178 bears the Phosphothreonine mark. The NAF domain maps to 312–336 (EKPVSMNAFELISSSSEFSLENLFE). Residues 343–372 (KKETRFTSQRSASEIMSKMEETAKPLGFNV) are PPI.

This sequence belongs to the protein kinase superfamily. CAMK Ser/Thr protein kinase family. SNF1 subfamily. As to quaternary structure, interacts with CBL2 and CBL3. Requires Mn(2+) as cofactor. As to expression, expressed at low levels in roots and shoots. Detected in root vascular bundles and in the leaf vascular tissue and hydathode, but not in root tips.

It is found in the cytoplasm. The protein resides in the nucleus. The catalysed reaction is L-seryl-[protein] + ATP = O-phospho-L-seryl-[protein] + ADP + H(+). It carries out the reaction L-threonyl-[protein] + ATP = O-phospho-L-threonyl-[protein] + ADP + H(+). CIPK serine-threonine protein kinases interact with CBL proteins. Binding of a CBL protein to the regulatory NAF domain of CIPK protein lead to the activation of the kinase in a calcium-dependent manner. Involved in K(+) homeostasis under low-K(+) stress. This is CBL-interacting serine/threonine-protein kinase 9 (CIPK9) from Arabidopsis thaliana (Mouse-ear cress).